The following is a 1096-amino-acid chain: MASEQLMSPASGGGRYFQMQPEQFPSMVSSLFSFAPAPTQETNRIFEELPKAVIVSVSRPDAGDISPVLLSYTIECQYKQFKWQLVKKASQVFYLHFALKKRAFIEEIHEKQEQVKEWLQNLGIGDHPPVVQDEDADEVPLHQDESAKNRDVPSSAALPVIRPLGRQQSISVRGKHAMQEYLNHFLGNLDIVNSREVCRFLEVSMLSFSPEYGPKLKEDYIMVKHLPKFSKSDDDSNRCCGCCWFCCCNDNWQKVWGVLKPGFLALLEDPFDAKLLDIIVFDVLPVSNGNDGVDISLAVELKDHNPLRHAFKVTSGNRSIRIRAKNSAKVKDWVASINDAALRPPEGWCHPHRFGSYAPPRGLTDDGSQAQWFVDGGAAFAAIAAAIENAKSEIFICGWWVCPELYLRRPFDPHTSSRLDNLLENKAKQGVQIYILIYKEVALALKINSVYSKRRLLGIHENVRVLRYPDHFSSGVYLWSHHEKLVIVDNQVCFIGGLDLCFGRYDTFEHKVGDNPSVTWPGKDYYNPRESEPNTWEDALKDELERKKHPRMPWHDVHCALWGPPCRDVARHFVQRWNYAKRNKAPYEDSIPLLMPQHHMVIPHYMGRQEESDIESKKEEDSIRGIRRDDSFSSRSSLQDIPLLLPHEPVDQDGSSGGHKENGTNNRNGPFSFRKSKIEPVDGDTPMRGFVDDRNGLDLPVAKRGSNAIDSEWWETQDHDYQVGSPDETGQVGPRTSCRCQIIRSVSQWSAGTSQVEESIHSAYRSLIDKAEHFIYIENQFFISGLSGDDTVKNRVLEALYKRILRAHNEKKIFRVVVVIPLLPGFQGGIDDSGAASVRAIMHWQYRTIYRGHNSILTNLYNTIGVKAHDYISFYGLRAYGKLSEDGPVATSQVYVHSKIMIVDDRAALIGSANINDRSLLGSRDSEIGVLIEDTELVDSRMAGKPWKAGKFSSSLRLSLWSEHLGLRTGEIDQIIDPVSDSTYKEIWMATAKTNTMIYQDVFSCVPNDLIHSRMAFRQSLSYWKEKLGHTTIDLGIAPEKLESYHNGDIKRSDPMDRLKAIKGHLVSFPLDFMCKEDLRPVFNESEYYASPQVFH.

The residue at position 2 (Ala2) is an N-acetylalanine. The PX domain occupies 50 to 204 (PKAVIVSVSR…REVCRFLEVS (155 aa)). The interval 131–152 (VQDEDADEVPLHQDESAKNRDV) is disordered. Residues 139 to 151 (VPLHQDESAKNRD) are compositionally biased toward basic and acidic residues. One can recognise a PH domain in the interval 234–342 (DDSNRCCGCC…WVASINDAAL (109 aa)). One can recognise a PLD phosphodiesterase 1 domain in the interval 477 to 504 (YLWSHHEKLVIVDNQVCFIGGLDLCFGR). Active-site residues include His482, Lys484, and Asp489. Positions 607–632 (GRQEESDIESKKEEDSIRGIRRDDSF) are enriched in basic and acidic residues. The tract at residues 607–691 (GRQEESDIES…DGDTPMRGFV (85 aa)) is disordered. The PLD phosphodiesterase 2 domain maps to 892 to 919 (SQVYVHSKIMIVDDRAALIGSANINDRS). Residues His897, Lys899, and Asp904 contribute to the active site.

It belongs to the phospholipase D family. PXPH-PLD subfamily. Requires Does not require Ca(2+) or any other cation for activity. as cofactor. In terms of tissue distribution, expressed in inflorescences, flowers, siliques, stems, leaves, and roots. Highest expression in roots.

It localises to the cytoplasmic vesicle. It catalyses the reaction a 1,2-diacyl-sn-glycero-3-phosphocholine + H2O = a 1,2-diacyl-sn-glycero-3-phosphate + choline + H(+). Calcium-independent and PIP2-dependent. Functionally, hydrolyzes glycerol-phospholipids at the terminal phosphodiesteric bond to generate phosphatidic acids (PA). Phosphatidylcholine-selective. Regulates root-hair morphogenesis. Contributes to the supply of inorganic phosphorus for cell metabolism and diacylglycerol moieties for galactolipid synthesis in phosphorus-starved roots. Involved in root elongation during phosphate limitation. The protein is Phospholipase D zeta 1 of Arabidopsis thaliana (Mouse-ear cress).